The following is a 92-amino-acid chain: Small ribosomal subunit protein uS19 (92 aa).

The protein belongs to the universal ribosomal protein uS19 family.

Its function is as follows. Protein S19 forms a complex with S13 that binds strongly to the 16S ribosomal RNA. The chain is Small ribosomal subunit protein uS19 from Neisseria gonorrhoeae (strain ATCC 700825 / FA 1090).